We begin with the raw amino-acid sequence, 183 residues long: Copper metallothionein 2 (183 aa).

The interval 1–35 is cys-rich copper-binding 1; the sequence is MAFNPNPEKTTSCCSTSKAQDKCTCPKGKCECETC. Residues 36 to 45 are spacer B1; that stretch reads PKSTKTPGSG. The tract at residues 46–79 is cys-rich copper-binding 2; it reads PCNCGVKEKVSTCGCNGSGAACTCPPGQCACDSC. Positions 80–88 are spacer B2; it reads PRKAKSVST. The tract at residues 89 to 110 is cys-rich copper-binding 3; the sequence is CGCGGSAAACSCPPGKCACDSC. A spacer B3 region spans residues 111–120; sequence PKQAQEKVSS. The cys-rich copper-binding 4 stretch occupies residues 121-142; sequence CACNGSGGACTCPPGKCSCSGC. The tract at residues 143–156 is spacer B4; it reads PAQAKENPADQPTT. Residues 157-183 form a cys-rich copper-binding 5 region; it reads CGCQGVGVACTCPPGQCACDGCPAKAK.

This sequence belongs to the metallothionein superfamily.

The protein localises to the cytoplasm. The protein resides in the cell cortex. Its function is as follows. Copper metallothionein that protects the cell against copper toxicity by tightly chelating copper ions. Required for antioxidant-mediated growth rescue in the presence of fluconazole. Acts as a critical factors for lung colonization and virulence. The chain is Copper metallothionein 2 from Cryptococcus neoformans var. grubii serotype A (strain H99 / ATCC 208821 / CBS 10515 / FGSC 9487) (Filobasidiella neoformans var. grubii).